The following is a 510-amino-acid chain: Chromosomal replication initiator protein DnaA (510 aa).

Residues 1–107 are domain I, interacts with DnaA modulators; it reads MTNDPGSGFA…VRIAPPPADD (107 aa). Residues 107–169 form a domain II region; it reads DDDDSVAAAV…ADTSASADGT (63 aa). The segment at 119-168 is disordered; sequence PGLEASPETSQEVSDEIDDFGENAPKSRQSWPTHFKKRSTDADTSASADG. Residues 170–386 form a domain III, AAA+ region region; the sequence is SLNRRYTFDT…GALIRVTAFA (217 aa). Residues glycine 214, glycine 216, lysine 217, and threonine 218 each coordinate ATP. Residues 387-510 are domain IV, binds dsDNA; the sequence is SLNKTPIDKA…TTRIRQRSKR (124 aa).

It belongs to the DnaA family. Oligomerizes as a right-handed, spiral filament on DNA at oriC.

The protein localises to the cytoplasm. In terms of biological role, plays an essential role in the initiation and regulation of chromosomal replication. ATP-DnaA binds to the origin of replication (oriC) to initiate formation of the DNA replication initiation complex once per cell cycle. Binds the DnaA box (a 9 base pair repeat at the origin) and separates the double-stranded (ds)DNA. Forms a right-handed helical filament on oriC DNA; dsDNA binds to the exterior of the filament while single-stranded (ss)DNA is stabiized in the filament's interior. The ATP-DnaA-oriC complex binds and stabilizes one strand of the AT-rich DNA unwinding element (DUE), permitting loading of DNA polymerase. After initiation quickly degrades to an ADP-DnaA complex that is not apt for DNA replication. Binds acidic phospholipids. In Mycobacterium ulcerans (strain Agy99), this protein is Chromosomal replication initiator protein DnaA.